The chain runs to 232 residues: Large ribosomal subunit protein uL1 (232 aa).

Belongs to the universal ribosomal protein uL1 family. In terms of assembly, part of the 50S ribosomal subunit.

In terms of biological role, binds directly to 23S rRNA. The L1 stalk is quite mobile in the ribosome, and is involved in E site tRNA release. Protein L1 is also a translational repressor protein, it controls the translation of the L11 operon by binding to its mRNA. The protein is Large ribosomal subunit protein uL1 of Liberibacter asiaticus (Citrus greening disease).